We begin with the raw amino-acid sequence, 423 residues long: Putative competence-damage inducible protein (423 aa).

It belongs to the CinA family.

The chain is Putative competence-damage inducible protein from Streptococcus equi subsp. zooepidemicus (strain MGCS10565).